The sequence spans 179 residues: Large ribosomal subunit protein uL5 (179 aa).

It belongs to the universal ribosomal protein uL5 family. Part of the 50S ribosomal subunit; part of the 5S rRNA/L5/L18/L25 subcomplex. Contacts the 5S rRNA and the P site tRNA. Forms a bridge to the 30S subunit in the 70S ribosome.

Its function is as follows. This is one of the proteins that bind and probably mediate the attachment of the 5S RNA into the large ribosomal subunit, where it forms part of the central protuberance. In the 70S ribosome it contacts protein S13 of the 30S subunit (bridge B1b), connecting the 2 subunits; this bridge is implicated in subunit movement. Contacts the P site tRNA; the 5S rRNA and some of its associated proteins might help stabilize positioning of ribosome-bound tRNAs. This is Large ribosomal subunit protein uL5 from Desulfitobacterium hafniense (strain Y51).